We begin with the raw amino-acid sequence, 667 residues long: MRFNLKAPFEPRGDQPEAITRLVEGLRRGDRFQTLLGVTGSGKTFTMASIIERVQQPALVISPNKALVAQLYREFRSFFPENRVELFISYYDYYQPEAYIPTKDLYIEKDADINDLLARMRISALKSVLTRKDVVVVASVSAIYASGDPRDFQELNISLEIGQRIPRNELALKLASIQYSRSEDISSGGVFHLRGDVVEIFPPYEDYGIRIYFFDDEIERIISFDPMNRKTLEEFDRIIIYPAKEFVTTEEKIKHAVKEIERDLELRAKELEKNGKYLEAQRLKQRTLYDLEMLTTLGYCSGIENYSRYFDGRKPGEPPYTILDYFDKSEMIVFLDESHITVPQIRAMYHGDHSRKKNLVEYGFRLPSAFDNRPLTFEEFLESVGQIIFVSATPGDYELSVSTQIVEQLIRPTGLIDPEVVVKPTQNQVDDFIEEVQKVIERGERALVTVLTKKAAEMFSAYLNELGIRAEYLHSELDTVERVEVLKKLREGSVDVVVGVNLLREGLDLPEVSLVAIMDADKEGFLRSETTLIQTIGRAARNINGKVLLYADRITNSMKRAIEETNRRRMKQLMYNIEHDIKPESIVKPLYENIFEEFADNEEKIEIAKNTYLDGILALKEDLEAEEYLALLEEEMWRASSELRYEDAAMLRDEMLRIKRETKKDNI.

The 172-residue stretch at 24–195 (EGLRRGDRFQ…SSGGVFHLRG (172 aa)) folds into the Helicase ATP-binding domain. 37–44 (GVTGSGKT) provides a ligand contact to ATP. The short motif at 90-113 (YYDYYQPEAYIPTKDLYIEKDADI) is the Beta-hairpin element. Positions 428-581 (QVDDFIEEVQ…QLMYNIEHDI (154 aa)) constitute a Helicase C-terminal domain. One can recognise a UVR domain in the interval 626 to 661 (EEYLALLEEEMWRASSELRYEDAAMLRDEMLRIKRE).

Belongs to the UvrB family. As to quaternary structure, forms a heterotetramer with UvrA during the search for lesions. Interacts with UvrC in an incision complex.

It localises to the cytoplasm. Its function is as follows. The UvrABC repair system catalyzes the recognition and processing of DNA lesions. A damage recognition complex composed of 2 UvrA and 2 UvrB subunits scans DNA for abnormalities. Upon binding of the UvrA(2)B(2) complex to a putative damaged site, the DNA wraps around one UvrB monomer. DNA wrap is dependent on ATP binding by UvrB and probably causes local melting of the DNA helix, facilitating insertion of UvrB beta-hairpin between the DNA strands. Then UvrB probes one DNA strand for the presence of a lesion. If a lesion is found the UvrA subunits dissociate and the UvrB-DNA preincision complex is formed. This complex is subsequently bound by UvrC and the second UvrB is released. If no lesion is found, the DNA wraps around the other UvrB subunit that will check the other stand for damage. In Kosmotoga olearia (strain ATCC BAA-1733 / DSM 21960 / TBF 19.5.1), this protein is UvrABC system protein B.